The primary structure comprises 408 residues: Collagen and calcium-binding EGF domain-containing protein 1 (408 aa).

A signal peptide spans 1 to 35; that stretch reads MVPPPLPSRGGAAKRQLGKSLGPLLLLLALGHTWT. The 42-residue stretch at 135 to 176 folds into the EGF-like; calcium-binding domain; the sequence is DIDECATSNTTLCAHICINTMGSYHCECREGYILEDDGRTCT. 3 cysteine pairs are disulfide-bonded: Cys139-Cys151, Cys147-Cys160, and Cys162-Cys175. Asn143 carries an N-linked (GlcNAc...) asparagine glycan. A glycan (N-linked (GlcNAc...) asparagine) is linked at Asn183. Disordered regions lie at residues 246-335 and 361-408; these read YLPG…GPPG and HRTH…NFYP. Collagen-like domains lie at 247–292 and 302–335; these read LPGP…PMGP and GRRG…GPPG. Residues 272 to 281 are compositionally biased toward pro residues; sequence PGMPGPPGQP. Positions 283–294 are enriched in low complexity; sequence PRGSMGPMGPSP. Positions 325–334 are enriched in pro residues; it reads PGPPGSPGPP. Ser387 carries an O-linked (Xyl...) (chondroitin sulfate) serine glycan. The span at 390–402 shows a compositional bias: basic and acidic residues; the sequence is DYSRRTEARDPEA.

This sequence belongs to the CCBE1 family.

It is found in the secreted. Its function is as follows. Required for lymphangioblast budding and angiogenic sprouting from venous endothelium during embryogenesis. The protein is Collagen and calcium-binding EGF domain-containing protein 1 (Ccbe1) of Mus musculus (Mouse).